Consider the following 309-residue polypeptide: Glutaminase (309 aa).

Residues S64, N114, E160, N167, Y191, Y243, and V261 each contribute to the substrate site.

It belongs to the glutaminase family. As to quaternary structure, homotetramer.

The catalysed reaction is L-glutamine + H2O = L-glutamate + NH4(+). The protein is Glutaminase of Methylorubrum populi (strain ATCC BAA-705 / NCIMB 13946 / BJ001) (Methylobacterium populi).